Reading from the N-terminus, the 1396-residue chain is DNA-directed RNA polymerase subunit beta' (1396 aa).

Residues Cys72, Cys74, Cys87, and Cys90 each coordinate Zn(2+). Mg(2+) is bound by residues Asp463, Asp465, and Asp467. Cys814, Cys889, Cys896, and Cys899 together coordinate Zn(2+).

This sequence belongs to the RNA polymerase beta' chain family. The RNAP catalytic core consists of 2 alpha, 1 beta, 1 beta' and 1 omega subunit. When a sigma factor is associated with the core the holoenzyme is formed, which can initiate transcription. Mg(2+) is required as a cofactor. Requires Zn(2+) as cofactor.

The enzyme catalyses RNA(n) + a ribonucleoside 5'-triphosphate = RNA(n+1) + diphosphate. DNA-dependent RNA polymerase catalyzes the transcription of DNA into RNA using the four ribonucleoside triphosphates as substrates. This is DNA-directed RNA polymerase subunit beta' from Chlamydia trachomatis serovar L2b (strain UCH-1/proctitis).